We begin with the raw amino-acid sequence, 310 residues long: ADP-L-glycero-D-manno-heptose-6-epimerase (310 aa).

Residues 10–11, 31–32, Lys38, Lys53, 75–79, and Asn92 contribute to the NADP(+) site; these read FI, DN, and EGACS. The Proton acceptor role is filled by Tyr140. Lys144 serves as a coordination point for NADP(+). Asn169 contacts substrate. Residues Val170 and Lys178 each coordinate NADP(+). Lys178 (proton acceptor) is an active-site residue. Substrate-binding positions include Ser180, His187, 201–204, and Arg209; that span reads FEGS. Lys267 is subject to N6-acetyllysine. Tyr272 provides a ligand contact to substrate.

It belongs to the NAD(P)-dependent epimerase/dehydratase family. HldD subfamily. As to quaternary structure, homopentamer. NADP(+) is required as a cofactor. The cofactor is NAD(+).

It carries out the reaction ADP-D-glycero-beta-D-manno-heptose = ADP-L-glycero-beta-D-manno-heptose. Its pathway is nucleotide-sugar biosynthesis; ADP-L-glycero-beta-D-manno-heptose biosynthesis; ADP-L-glycero-beta-D-manno-heptose from D-glycero-beta-D-manno-heptose 7-phosphate: step 4/4. The protein operates within bacterial outer membrane biogenesis; LPS core biosynthesis. With respect to regulation, completely inhibited by ADP and ADP-glucose, and partially inhibited by ATP and NADH. Functionally, catalyzes the interconversion between ADP-D-glycero-beta-D-manno-heptose and ADP-L-glycero-beta-D-manno-heptose via an epimerization at carbon 6 of the heptose. This is ADP-L-glycero-D-manno-heptose-6-epimerase (hldD) from Escherichia coli (strain K12).